Reading from the N-terminus, the 329-residue chain is DNA-directed RNA polymerase subunit alpha (329 aa).

The tract at residues 1-234 is alpha N-terminal domain (alpha-NTD); it reads MSGSVTEFLK…EQLDAFVELR (234 aa). Positions 248–329 are alpha C-terminal domain (alpha-CTD); it reads FDPILLRPVD…WPPESIAEKD (82 aa).

The protein belongs to the RNA polymerase alpha chain family. In terms of assembly, homodimer. The RNAP catalytic core consists of 2 alpha, 1 beta, 1 beta' and 1 omega subunit. When a sigma factor is associated with the core the holoenzyme is formed, which can initiate transcription.

It catalyses the reaction RNA(n) + a ribonucleoside 5'-triphosphate = RNA(n+1) + diphosphate. In terms of biological role, DNA-dependent RNA polymerase catalyzes the transcription of DNA into RNA using the four ribonucleoside triphosphates as substrates. The protein is DNA-directed RNA polymerase subunit alpha of Pseudoalteromonas atlantica (strain T6c / ATCC BAA-1087).